The sequence spans 887 residues: Serine/threonine-protein kinase greatwall (887 aa).

The Protein kinase domain maps to 32–843 (FGIVKPISRG…LKDLKAHPLF (812 aa)). ATP contacts are provided by residues 38-46 (ISRGAFGKV) and Lys-61. Residue Asp-155 is the Proton acceptor of the active site. A phosphothreonine; by CDK1; in vitro mark is found at Thr-221 and Thr-244. Positions 321–353 (DAEAPPYFNSSRVKDSSSEQARSKKPTGSSASQ) are disordered. At Ser-363 the chain carries Phosphoserine; by CDK1; in vitro. The interval 410 to 435 (PKDFDKTGQGELGKFTSSPDSPPWLA) is disordered. Ser-465 carries the phosphoserine; by CDK1; in vitro modification. A disordered region spans residues 556–624 (RDGEVSSTSE…EITPDNKGIP (69 aa)). Residues 575-587 (QDSSSTGMSVTEN) are compositionally biased toward polar residues. The segment covering 588–604 (QIDRDLSHVDKSIKELS) has biased composition (basic and acidic residues). Over residues 608–617 (SQSENSEEIT) the composition is skewed to acidic residues. Residues Ser-654 and Ser-677 each carry the phosphoserine; by CDK1; in vitro modification. The residue at position 748 (Thr-748) is a Phosphothreonine; by CDK1. The region spanning 844-887 (HGMEWEELQYQPMSFIPQPDDETDTTYFEARNNAQHLKVSGFSL) is the AGC-kinase C-terminal domain.

This sequence belongs to the protein kinase superfamily. AGC Ser/Thr protein kinase family. In terms of assembly, interacts with arpp19 and ensa, leading to their phosphorylation. Post-translationally, phosphorylation at Thr-748 by CDK1 during M phase activates its kinase activity. Not active during other phases of the cell cycle. Has the ability to autophosphorylate.

Its subcellular location is the cytoplasm. It is found in the cytoskeleton. The protein localises to the microtubule organizing center. The protein resides in the centrosome. It localises to the nucleus. It catalyses the reaction L-seryl-[protein] + ATP = O-phospho-L-seryl-[protein] + ADP + H(+). The enzyme catalyses L-threonyl-[protein] + ATP = O-phospho-L-threonyl-[protein] + ADP + H(+). Its function is as follows. Serine/threonine kinase that plays a key role in M phase by acting as a regulator of mitosis entry and maintenance. Acts by promoting the inactivation of protein phosphatase 2A (PP2A) during M phase: does not directly inhibit PP2A but acts by mediating phosphorylation and subsequent activation of arpp19 and ensa at 'Ser-67', 2 phosphatase inhibitors that specifically inhibit the ppp2r2d (PR55-delta) subunit of PP2A. Inactivation of PP2A during M phase is essential to keep cyclin-B1-CDK1 activity high. Following DNA damage, it is also involved in checkpoint recovery by being inhibited. In Xenopus laevis (African clawed frog), this protein is Serine/threonine-protein kinase greatwall (mastl).